A 265-amino-acid chain; its full sequence is Putative hydro-lyase PA2116 (265 aa).

This sequence belongs to the D-glutamate cyclase family.

The polypeptide is Putative hydro-lyase PA2116 (Pseudomonas aeruginosa (strain ATCC 15692 / DSM 22644 / CIP 104116 / JCM 14847 / LMG 12228 / 1C / PRS 101 / PAO1)).